Reading from the N-terminus, the 101-residue chain is Small ribosomal subunit protein uS14A (101 aa).

Residues 32–71 (RRPGTPEPERNRAVEELRRQPRDASATRVRNRDSVDGRPR) form a disordered region. 2 stretches are compositionally biased toward basic and acidic residues: residues 38–53 (EPER…RQPR) and 61–70 (RNRDSVDGRP).

It belongs to the universal ribosomal protein uS14 family. In terms of assembly, part of the 30S ribosomal subunit. Contacts proteins S3 and S10.

Its function is as follows. Binds 16S rRNA, required for the assembly of 30S particles and may also be responsible for determining the conformation of the 16S rRNA at the A site. The protein is Small ribosomal subunit protein uS14A of Streptomyces griseus subsp. griseus (strain JCM 4626 / CBS 651.72 / NBRC 13350 / KCC S-0626 / ISP 5235).